The sequence spans 593 residues: Regulatory protein NPR1 (593 aa).

Phosphoserine is present on residues S11, S15, S55, and S59. A BTB domain is found at 65-144; it reads SDAKLVLSDG…VYSSRVRPPP (80 aa). A C2HC NPR-type zinc finger spans residues 147-161; it reads VSECADENCCHVACR. Zn(2+)-binding residues include C150 and C155. Position 156 is an S-nitrosocysteine (C156). 2 residues coordinate Zn(2+): H157 and C160. ANK repeat units follow at residues 229 to 258, 265 to 295, 297 to 324, 328 to 357, and 361 to 397; these read KSNV…ELGL, KHVS…NLDD, CALH…DVNH, RGYT…SASE, and EGRT…CVEI. The short motif at 345–348 is the SIM3, required fo binding to SUMO3 and subsequent sumoylation element; the sequence is ILSL. The salicylic acid-binding core (SBC) stretch occupies residues 387–525; sequence HSLKGRLCVE…DQIMNCEDLT (139 aa). A salicylate-binding site is contributed by R432. Positions 537–554 match the Nuclear localization signal motif; sequence KRLQKKQRYMEIQETLKK. The disordered stretch occupies residues 563–593; it reads LGNSSLTDSTSSTSKSTGGKRSNRKLSHRRR. A compositionally biased stretch (low complexity) spans 566-579; sequence SSLTDSTSSTSKST. Over residues 583–593 the composition is skewed to basic residues; it reads RSNRKLSHRRR.

It belongs to the plant 'ANKYRIN-BTB/POZ' family. 'NPR1-like' subfamily. In terms of assembly, homodimer. Oligomer of dimers in an uninduced quiescent state; disulfide-linked. Forms activated (i.e. sumoylated) homodimers and monomers upon systemic acquired resistance (SAR) induction. Interacts with TGA1, TGA3, TGA4, TGA5, TGA6, TGA7 and with reduced forms of TGA1 and TGA4. Activated homodimer binds two TGA3 dimers in the presence of DNA via its ANK 2 repeat (265-295), thus forming a TGA3(2)-NPR1(2)-TGA3(2) complex in which NPR1 serves as a transcription cofactor by bridging two transcription factor complexes in an enhanceosome. Interacts with NIMIN-1 and NIMIN-3 via its C-terminal region, and with NIMIN-2 via its N-terminal region. Interacts with SUMO3 but not with SUMO1 and SUMO2; this interaction is required for phosphorylation at Ser-11 and Ser-15, and triggers activation by sumoylation and subsequent degradation. Binds to NPR3 and NPR4; these interactions are promoted by association of salicylic acid (SA) with NPR3, but disrupted by SA association with NPR4, probably due to conformational changes. Binds to CUL3A, a core component of the cullin-RING ubiquitin ligases (CRL); this interaction requires NPR3 and NPR4. Interacts with NPR2 independently of SA. Binds to WRKY70 when unmodified (i.e. not sumoylated). Post-translationally, phosphorylation at Ser-55 and Ser-59 prevents sumoylation to ensure stability and quiescence. In terms of processing, phosphorylated at Ser-11 and Ser-15 in the nucleus; facilitates its recruitment to a cullin3-based ubiquitin ligase leading to polyubiquitination and subsequent CUL3/CSN-mediated degradation. This phosphorylation at Ser-11 and Ser-15 requires interaction with SUMO3, and promotes in turn activation by sumoylation and subsequent degradation. Ubiquitinated. Post-translationally, sumoylated by SUMO3 independently of an E3 ligase to activate defense gene expression by switching from association with WRKY transcriptional repressors (e.g. WRKY70) to TGA transcriptional activators (e.g. TGA3). Sumoylation is inhibited by phosphorylation at Ser-55 and Ser-59, but seems to promote phosphorylation at Ser-11 and Ser-15. Sumoylation also triggers degradation, making immune induction transient. In terms of processing, the Cys-82-SH group reacts with Cys-216-SH of the other subunit to form an intermolecular disulfide. This disulfide might subsequently be reduced upon systemic acquired resistance (SAR) induction. S-nitrosylation at Cys-156 facilitates its oligomerization.

It is found in the cytoplasm. Its subcellular location is the nucleus. The protein localises to the nuclear body. The protein operates within protein modification; protein ubiquitination. Salicylic acid (SA)-binding substrate-specific adapter of an E3 ubiquitin-protein ligase complex (CUL3-RBX1-BTB) which mediates the ubiquitination and subsequent proteasomal degradation of target proteins. Transcription cofactor that represses gene expression in the absence of salicylic acid (SA), when attached to negative cis-elements (W-box) with WRKY transcription factors (e.g. WRKY70), but stimulates gene expression upon activation by SA, when sumoylated and attached to positive cis-elements (as-1) with TGA transcription factors (e.g. TGA3), thus confering immunity through a series of gene regulations ending in a significant increase in antimicrobial and defense genes expression (e.g. PR-1 and PR-2). Binds to SA with low capacity; this leads to conformational changes. Key positive regulator of the SA-dependent signaling pathway that negatively regulates jasmonic acid (JA)-dependent signaling pathway. Controls the onset of systemic acquired resistance (SAR). Upon SAR induction, a biphasic change in cellular reduction potential occurs, resulting in reduction of the cytoplasmic oligomeric form to dimeric and monomeric forms, which accumulate in the nucleus and activate gene expression. Appears to control lesion expansion by acting as an inhibitor of programmed cell death (PCD) during effector-triggered immunity (ETI) that occurs in response to incompatible interaction with avirulent pathogenic bacteria (i.e. Pseudomonas syringae ES4326/avrRpt2) ending in a hypersensitive response (HR). Phosphorylated form is target of proteasome degradation. This chain is Regulatory protein NPR1, found in Arabidopsis thaliana (Mouse-ear cress).